We begin with the raw amino-acid sequence, 352 residues long: Dysbindin (352 aa).

A Phosphoserine modification is found at serine 11. The stretch at 92–180 forms a coiled coil; it reads TSLAELQEQL…AELDTEHAQK (89 aa). Positions 243-256 match the Nuclear export signal motif; that stretch reads LMDLSDQEALDVFL. The segment at 267-352 is disordered; sequence SPGLEMESNP…SDQCDSTQDI (86 aa). Polar residues predominate over residues 274–285; that stretch reads SNPSQNEMNLQI. Positions 286-301 are enriched in low complexity; sequence PNPSESASQPPASPSA. Residues serine 340 and serine 343 each carry the phosphoserine modification.

This sequence belongs to the dysbindin family. Interacts (via its coiled coil domain) with KXD1. Interacts with AP3B2, TRIM32, CMYA5, PI4K2 and RNF151. Interacts with the DNA-dependent protein kinase complex DNA-PK; the interaction phosphorylates DTNBP1 in vitro. Interacts directly in this complex with XRCC5 and XRCC6. Interacts with XPO1; the interaction exports DTNBP1 out of the nucleus. Component of the biogenesis of lysosome-related organelles complex 1 (BLOC-1) composed of at least BLOC1S1, BLOC1S2, BLOC1S3, BLOC1S4, BLOC1S5, BLOC1S6, DTNBP1/BLOC1S7 and SNAPIN/BLOC1S8. Interacts directly in the complex with BLOC1S5, BLOC1S6 and SNAPIN/BLOC1S8. The BLOC-1 complex associates with the AP-3 protein complex and membrane protein cargos. This BLOC-1 complex also associates with the BLOC-2 complex in endosomes. Binds to DTNA and DTNB but may not be a physiological binding partner. Interacts with AP3M1. Post-translationally, ubiquitinated by TRIM32. Ubiquitination leads to DTNBP1 degradation. In terms of tissue distribution, detected in hippocampus neurons (at protein level). Ubiquitously expressed. The highest expression is observed in testis, liver, kidney, brain, heart and lung. In the brain, found primarily in axon bundles and axon terminals, notably in the cerebellum and hippocampus. Expressed at lower levels in stomach, small intestine and skeletal muscle, where it is detected at the sarcolemma.

The protein localises to the cytoplasm. It localises to the cytoplasmic vesicle membrane. Its subcellular location is the cytoplasmic vesicle. It is found in the secretory vesicle. The protein resides in the synaptic vesicle membrane. The protein localises to the endosome membrane. It localises to the melanosome membrane. Its subcellular location is the nucleus. It is found in the postsynaptic density. The protein resides in the presynaptic cell membrane. The protein localises to the endoplasmic reticulum. Component of the BLOC-1 complex, a complex that is required for normal biogenesis of lysosome-related organelles (LRO), such as platelet dense granules and melanosomes. In concert with the AP-3 complex, the BLOC-1 complex is required to target membrane protein cargos into vesicles assembled at cell bodies for delivery into neurites and nerve terminals. The BLOC-1 complex, in association with SNARE proteins, is also proposed to be involved in neurite extension. Associates with the BLOC-2 complex to facilitate the transport of TYRP1 independent of AP-3 function. Plays a role in synaptic vesicle trafficking and in neurotransmitter release. Plays a role in the regulation of cell surface exposure of DRD2. May play a role in actin cytoskeleton reorganization and neurite outgrowth. May modulate MAPK8 phosphorylation. Appears to promote neuronal transmission and viability through regulating the expression of SNAP25 and SYN1, modulating PI3-kinase-Akt signaling and influencing glutamatergic release. Regulates the expression of SYN1 through binding to its promoter. Modulates prefrontal cortical activity via the dopamine/D2 pathway. The sequence is that of Dysbindin (Dtnbp1) from Rattus norvegicus (Rat).